The following is a 270-amino-acid chain: Glutamate racemase (270 aa).

Substrate contacts are provided by residues 7-8 (DS) and 39-40 (YG). The active-site Proton donor/acceptor is Cys70. 71–72 (NT) lines the substrate pocket. The Proton donor/acceptor role is filled by Cys194. 195 to 196 (TH) contacts substrate.

Belongs to the aspartate/glutamate racemases family.

The enzyme catalyses L-glutamate = D-glutamate. It functions in the pathway cell wall biogenesis; peptidoglycan biosynthesis. In terms of biological role, provides the (R)-glutamate required for cell wall biosynthesis. This chain is Glutamate racemase, found in Paracoccus denitrificans (strain Pd 1222).